The chain runs to 290 residues: UPF0761 membrane protein YihY (290 aa).

6 consecutive transmembrane segments (helical) span residues 44 to 64, 104 to 124, 140 to 160, 183 to 203, 210 to 230, and 244 to 264; these read LLSL…FPMF, VGAC…DSAL, FAVY…SLAI, IFPL…VPTI, AIVG…GFAL, and VLAV…IVLL.

Belongs to the UPF0761 family.

The protein resides in the cell inner membrane. The protein is UPF0761 membrane protein YihY of Shigella sonnei (strain Ss046).